Consider the following 298-residue polypeptide: Mitochondrial glycine transporter (298 aa).

Solcar repeat units follow at residues 5–84 (TKTR…MRTA), 105–189 (LTTY…AKEV), and 211–295 (TSTL…LIKL). The next 6 helical transmembrane spans lie at 11-36 (LIGG…TRIQ), 59-85 (GTLP…RTAI), 111-136 (LISG…VRYE), 164-187 (GFGP…EKAK), 215-241 (VNST…KTRM), and 270-288 (GLSM…AWGI).

This sequence belongs to the mitochondrial carrier (TC 2.A.29) family. SLC25A38 subfamily.

The protein resides in the mitochondrion inner membrane. It catalyses the reaction glycine(in) = glycine(out). Its function is as follows. Mitochondrial glycine transporter that imports glycine into the mitochondrial matrix. Plays an important role in providing glycine for the first enzymatic step in heme biosynthesis, the condensation of glycine with succinyl-CoA to produce 5-aminolevulinate (ALA) in the mitochondrial matrix. This Vanderwaltozyma polyspora (strain ATCC 22028 / DSM 70294 / BCRC 21397 / CBS 2163 / NBRC 10782 / NRRL Y-8283 / UCD 57-17) (Kluyveromyces polysporus) protein is Mitochondrial glycine transporter.